We begin with the raw amino-acid sequence, 60 residues long: MKIFLPVLVMLILCSMCLLTEGQVSTNKKCSNTSQCYKTCEKVVGVAAGKCMNGKCICYP.

The N-terminal stretch at 1–22 is a signal peptide; sequence MKIFLPVLVMLILCSMCLLTEG. Cystine bridges form between cysteine 30–cysteine 51, cysteine 36–cysteine 56, and cysteine 40–cysteine 58.

Belongs to the short scorpion toxin superfamily. Potassium channel inhibitor family. Alpha-KTx 15 subfamily. In terms of tissue distribution, expressed by the venom gland.

Its subcellular location is the secreted. Its function is as follows. Blocker of A-type voltage-gated potassium channels of cerebellar granular cells. May also inhibit Kv4/KCND when coexpressed with DPP6 or DPP10. The occlusion of the outer entry of the K(+) conducting pore is partially reversible and affects both open and closed channels. It shares the same target in rat brain than BmTX3 (AC Q8I0L5) and AmmTX3 (AC P60208). Has been shown to weakly inhibit TRPV1 channels. This is Potassium channel toxin alpha-KTx 15.9 from Lychas mucronatus (Chinese swimming scorpion).